We begin with the raw amino-acid sequence, 207 residues long: Ras-related protein Rab-8B (207 aa).

GTP contacts are provided by Ser17, Gly18, Val19, Gly20, Lys21, Thr22, Cys23, Thr35, Ser39, and Thr40. Mg(2+) is bound at residue Thr22. 2 consecutive short sequence motifs (switch) follow at residues 31–45 (DAFN…GIDF) and 63–80 (DTAG…YYRG). Mg(2+) contacts are provided by Thr40 and Asp63. Gly66 is a binding site for GTP. The residue at position 72 (Thr72) is a Phosphothreonine; by LRRK2. Asn121, Lys122, Asp124, Ala152, and Lys153 together coordinate GTP. Ser180 bears the Phosphoserine mark. Cysteine methyl ester is present on Cys204. Residue Cys204 is the site of S-geranylgeranyl cysteine attachment. Residues 205–207 (SLL) constitute a propeptide, removed in mature form.

It belongs to the small GTPase superfamily. Rab family. As to quaternary structure, associated with actin, delta-catenin and alpha and beta tubulins. Interacts with OTOF. Interacts with PEX5R. Interacts with RAB3IP. Interacts with VIM. Interacts with CDH1. Interacts with MICALL2. Interacts with GDI1, GDI2, CHML and CHM; phosphorylation at Thr-72 disrupts these interactions. Interacts with MICAL1. Requires Mg(2+) as cofactor. In terms of processing, phosphorylation of Thr-72 in the switch II region by LRRK2 prevents the association of RAB regulatory proteins, including CHM, CHML and RAB GDP dissociation inhibitors GDI1 and GDI2.

It localises to the cell membrane. The protein resides in the cytoplasmic vesicle. Its subcellular location is the phagosome. It is found in the phagosome membrane. The protein localises to the endosome membrane. It catalyses the reaction GTP + H2O = GDP + phosphate + H(+). With respect to regulation, regulated by guanine nucleotide exchange factors (GEFs) including RAB3IP/RABIN8 which promotes the exchange of bound GDP for free GTP. Regulated by GTPase activating proteins (GAPs) which increase the GTP hydrolysis activity. Inhibited by GDP dissociation inhibitors (GDIs). In terms of biological role, the small GTPases Rab are key regulators of intracellular membrane trafficking, from the formation of transport vesicles to their fusion with membranes. Rabs cycle between an inactive GDP-bound form and an active GTP-bound form that is able to recruit to membranes different sets of downstream effectors directly responsible for vesicle formation, movement, tethering and fusion. RAB8B may be involved in polarized vesicular trafficking and neurotransmitter release. May participate in cell junction dynamics in Sertoli cells. May also participate in the export of a subset of neosynthesized proteins through a Rab8-Rab10-Rab11-dependent endososomal export route. This chain is Ras-related protein Rab-8B, found in Homo sapiens (Human).